The following is a 1589-amino-acid chain: Centrosomal protein of 170 kDa protein B (1589 aa).

Positions 23-73 (IFVGREECELMLQSRSVDKQHAVINYDQDRDEHWVKDLGSLNGTFVNDMRI) constitute an FHA domain. Disordered regions lie at residues 130–261 (RSEA…GAAP), 287–309 (ITKF…EMVS), 325–388 (LLHR…RLQR), and 409–583 (FDED…EVEE). Basic and acidic residues-rich tracts occupy residues 147-156 (RPEKGDRRPG) and 243-253 (PAHEMPTKDAE). Over residues 330 to 344 (GPGDDRHSTKSDLPV) the composition is skewed to basic and acidic residues. Phosphoserine is present on residues S360 and S421. Composition is skewed to basic and acidic residues over residues 430–446 (PKAD…RDRP) and 467–476 (LKREKTEERL). Low complexity predominate over residues 478–489 (SPSPASRTPARP). S480 and S492 each carry phosphoserine. Residues 520-530 (EKVPPVLPAPL) show a composition bias toward pro residues. S536 bears the Phosphoserine mark. Over residues 538-548 (VGPPTPPPAPT) the composition is skewed to pro residues. T542 is modified (phosphothreonine). Phosphoserine is present on residues S597, S619, S655, S711, S721, S746, S748, S751, S753, S772, S829, S853, S954, S972, S986, and S988. 4 disordered regions span residues 598–895 (PELS…LQDL), 934–1316 (DAEC…PYGF), 1350–1374 (DGDT…TPAS), and 1532–1552 (AQPG…PASA). Residues 711-722 (SPAGPESSRRSG) show a composition bias toward low complexity. The segment covering 957 to 972 (DTASTVSLRSGKSGPS) has biased composition (polar residues). Residues 1029–1038 (SAIRRGHRPR) are compositionally biased toward basic residues. Phosphoserine is present on residues S1135, S1179, and S1199. The segment covering 1221–1230 (AANTATTTGP) has biased composition (polar residues). Residues 1286-1301 (PRAGSSSRARSRAPGP) are compositionally biased toward low complexity. Residue T1304 is modified to Phosphothreonine. 2 positions are modified to phosphoserine: S1356 and S1362. Over residues 1363 to 1374 (ASLSNMPSTPAS) the composition is skewed to polar residues. A compositionally biased stretch (low complexity) spans 1542 to 1552 (AAQSPPSPASA). A phosphoserine mark is found at S1545 and S1548.

It belongs to the CEP170 family.

It is found in the cytoplasm. It localises to the cytoskeleton. Functionally, plays a role in microtubule organization. The chain is Centrosomal protein of 170 kDa protein B (CEP170B) from Homo sapiens (Human).